A 420-amino-acid chain; its full sequence is ATP phosphoribosyltransferase regulatory subunit (420 aa).

This sequence belongs to the class-II aminoacyl-tRNA synthetase family. HisZ subfamily. As to quaternary structure, heteromultimer composed of HisG and HisZ subunits.

It is found in the cytoplasm. It functions in the pathway amino-acid biosynthesis; L-histidine biosynthesis; L-histidine from 5-phospho-alpha-D-ribose 1-diphosphate: step 1/9. In terms of biological role, required for the first step of histidine biosynthesis. May allow the feedback regulation of ATP phosphoribosyltransferase activity by histidine. This is ATP phosphoribosyltransferase regulatory subunit from Bacillus thuringiensis (strain Al Hakam).